Here is an 819-residue protein sequence, read N- to C-terminus: Eukaryotic translation initiation factor 3 subunit C (819 aa).

Positions 1–106 are disordered; sequence MSRFFLKTYE…DSSDEEDGKK (106 aa). 2 stretches are compositionally biased toward acidic residues: residues 17 to 41 and 47 to 59; these read GEEE…ELSD and DSDE…EDND. Residues 620–795 form the PCI domain; that stretch reads FHQHINLDLI…EYIIFERGEE (176 aa).

It belongs to the eIF-3 subunit C family. In terms of assembly, component of the eukaryotic translation initiation factor 3 (eIF-3) complex.

It localises to the cytoplasm. Its function is as follows. Component of the eukaryotic translation initiation factor 3 (eIF-3) complex, which is involved in protein synthesis of a specialized repertoire of mRNAs and, together with other initiation factors, stimulates binding of mRNA and methionyl-tRNAi to the 40S ribosome. The eIF-3 complex specifically targets and initiates translation of a subset of mRNAs involved in cell proliferation. In Kluyveromyces lactis (strain ATCC 8585 / CBS 2359 / DSM 70799 / NBRC 1267 / NRRL Y-1140 / WM37) (Yeast), this protein is Eukaryotic translation initiation factor 3 subunit C.